Reading from the N-terminus, the 404-residue chain is Peroxisomal biogenesis factor 9 (404 aa).

Helical transmembrane passes span 73 to 93, 94 to 114, and 149 to 169; these read FLFL…SLVF, LLGV…LLMG, and FGLD…FQVV. Residues 180 to 214 form a disordered region; it reads DGQRSQQSQNSGMNVASSSRGRHQLVPDRPGSQLS. The segment covering 181-198 has biased composition (polar residues); it reads GQRSQQSQNSGMNVASSS. Residues 349-369 traverse the membrane as a helical segment; the sequence is FFVGLVSWIVDETAACVVFCL.

It localises to the peroxisome membrane. Its function is as follows. Essential for the import of peroxisomal matrix proteins. This Yarrowia lipolytica (strain CLIB 122 / E 150) (Yeast) protein is Peroxisomal biogenesis factor 9 (PEX9).